We begin with the raw amino-acid sequence, 280 residues long: Thioredoxin-related transmembrane protein 1 (280 aa).

The N-terminal stretch at 1 to 26 (MAPSGSLAVPLAVLVLLLWGAPWTHG) is a signal peptide. The region spanning 27–132 (RRSNVRVITD…FINFISDKEW (106 aa)) is the Thioredoxin domain. The Extracellular portion of the chain corresponds to 27–180 (RRSNVRVITD…EDLGLPVWGS (154 aa)). Active-site nucleophile residues include Cys56 and Cys59. Cysteines 56 and 59 form a disulfide. Residues 181-203 (YTVFALATLFSGLLLGLCMIFVA) traverse the membrane as a helical segment. Residues 204-280 (DCLCPSKRRR…LGPSLATDKS (77 aa)) lie on the Cytoplasmic side of the membrane. Residues Cys205 and Cys207 are each lipidated (S-palmitoyl cysteine). A disordered region spans residues 218–280 (PYPSKKLLSE…LGPSLATDKS (63 aa)). Phosphoserine occurs at positions 228, 247, 270, 274, and 280. Residues 237-252 (EEQEADEEDVSEEEAE) show a composition bias toward acidic residues.

Interacts with ATP2A2. Post-translationally, palmitoylated; palmitoylation is required for localization to mitochondria-associated endoplasmic reticulum membrane (MAM). Ubiquitous. Highly expressed in kidney, liver, placenta and lung.

The protein resides in the endoplasmic reticulum membrane. The protein localises to the mitochondrion membrane. It is found in the secreted. It carries out the reaction Catalyzes the rearrangement of -S-S- bonds in proteins.. In terms of biological role, thiredoxin domain-containing protein that participates in various redox reactions through the reversible oxidation of its active center dithiol to a disulfide and catalyze dithiol-disulfide exchange reactions. Acts as a key inhibitor of the alternative triglyceride biosynthesis pathway by inhibiting the activity of TMEM68/DIESL at the endoplasmic reticulum, thereby restricting accumulation of triacylglycerol. The alternative triglyceride biosynthesis pathway mediates formation of triacylglycerol from diacylglycerol and membrane phospholipids. Acts as a protein disulfide isomerase by catalyzing formation or reduction of disulfide bonds. Specifically mediates formation of disulfide bonds of transmembrane proteins at the endoplasmic reticulum membrane. Involved in endoplasmic reticulum-associated degradation (ERAD) via its protein disulfide isomerase activity by acting on folding-defective polypeptides at the endoplasmic reticulum membrane. Acts as a negative regulator of platelet aggregation following secretion in the extracellular space. Acts as a regulator of endoplasmic reticulum-mitochondria contact sites via its ability to regulate redox signals. Regulates endoplasmic reticulum-mitochondria Ca(2+) flux. The sequence is that of Thioredoxin-related transmembrane protein 1 from Homo sapiens (Human).